The sequence spans 109 residues: Cell division suppressor protein YneA (109 aa).

One can recognise a LysM domain in the interval 39–90; sequence SEVDVNEGDSIWALADQYAAKSDMAKADFVSWVEKENNLTDGHVKAGDYVVI.

It belongs to the YneA family.

The protein localises to the cytoplasm. In terms of biological role, inhibits cell division during the SOS response. Affects a later stage of the cell division protein assembly, after the assembly of the Z ring, by probably suppressing recruitment of FtsL and/or DivIC to the division machinery. This Listeria innocua serovar 6a (strain ATCC BAA-680 / CLIP 11262) protein is Cell division suppressor protein YneA.